The following is a 454-amino-acid chain: tRNA modification GTPase MnmE (454 aa).

The (6S)-5-formyl-5,6,7,8-tetrahydrofolate site is built by R23, E80, and K120. One can recognise a TrmE-type G domain in the interval 216-377 (GMKVVIAGRP…LRNHLKQSMG (162 aa)). N226 is a binding site for K(+). GTP is bound by residues 226–231 (NAGKSS), 245–251 (TDIAGTT), 270–273 (DTAG), 335–338 (NKAD), and 358–360 (SAR). Mg(2+) is bound at residue S230. K(+) is bound by residues T245, I247, and T250. T251 lines the Mg(2+) pocket. K454 is a (6S)-5-formyl-5,6,7,8-tetrahydrofolate binding site.

The protein belongs to the TRAFAC class TrmE-Era-EngA-EngB-Septin-like GTPase superfamily. TrmE GTPase family. In terms of assembly, homodimer. Heterotetramer of two MnmE and two MnmG subunits. It depends on K(+) as a cofactor.

The protein localises to the cytoplasm. In terms of biological role, exhibits a very high intrinsic GTPase hydrolysis rate. Involved in the addition of a carboxymethylaminomethyl (cmnm) group at the wobble position (U34) of certain tRNAs, forming tRNA-cmnm(5)s(2)U34. The sequence is that of tRNA modification GTPase MnmE from Salmonella choleraesuis (strain SC-B67).